Here is a 363-residue protein sequence, read N- to C-terminus: MNASAAALNESQVVAVAAEGAAAAATAAGTPDTSEWGPPAASAALGGGGGPNGSLELSSQLPAGPSGLLLSAVNPWDVLLCVSGTVIAGENALVVALIASTPALRTPMFVLVGSLATADLLAGCGLILHFVFQYVVPSETVSLLMVGFLVASFAASVSSLLAITVDRYLSLYNALTYYSRRTLLGVHLLLAATWTVSLGLGLLPVLGWNCLADRASCSVVRPLTRSHVALLSTSFFVVFGIMLHLYVRICQVVWRHAHQIALQQHCLAPPHLAATRKGVGTLAVVLGTFGASWLPFAIYCVVGSQEDPAIYTYATLLPATYNSMINPIIYAFRNQEIQRALWLLFCGCFQSKVPFRSRSPSEV.

The Extracellular portion of the chain corresponds to 1 to 75 (MNASAAALNE…SGLLLSAVNP (75 aa)). 2 N-linked (GlcNAc...) asparagine glycosylation sites follow: Asn-2 and Asn-9. Residues 28-51 (AGTPDTSEWGPPAASAALGGGGGP) form a disordered region. N-linked (GlcNAc...) asparagine glycosylation is present at Asn-52. A helical membrane pass occupies residues 76 to 95 (WDVLLCVSGTVIAGENALVV). The Cytoplasmic segment spans residues 96–107 (ALIASTPALRTP). Residues 108–131 (MFVLVGSLATADLLAGCGLILHFV) form a helical membrane-spanning segment. Residues 132–143 (FQYVVPSETVSL) are Extracellular-facing. The chain crosses the membrane as a helical span at residues 144–165 (LMVGFLVASFAASVSSLLAITV). The Cytoplasmic portion of the chain corresponds to 166–186 (DRYLSLYNALTYYSRRTLLGV). The helical transmembrane segment at 187 to 206 (HLLLAATWTVSLGLGLLPVL) threads the bilayer. Topologically, residues 207–231 (GWNCLADRASCSVVRPLTRSHVALL) are extracellular. The helical transmembrane segment at 232-250 (STSFFVVFGIMLHLYVRIC) threads the bilayer. The Cytoplasmic portion of the chain corresponds to 251 to 278 (QVVWRHAHQIALQQHCLAPPHLAATRKG). A helical transmembrane segment spans residues 279–305 (VGTLAVVLGTFGASWLPFAIYCVVGSQ). Residues 306 to 310 (EDPAI) are Extracellular-facing. The chain crosses the membrane as a helical span at residues 311–332 (YTYATLLPATYNSMINPIIYAF). The Cytoplasmic portion of the chain corresponds to 333–363 (RNQEIQRALWLLFCGCFQSKVPFRSRSPSEV). Cys-346 is lipidated: S-palmitoyl cysteine. Ser-357, Ser-359, and Ser-361 each carry phosphoserine.

This sequence belongs to the G-protein coupled receptor 1 family. As to expression, expressed in the brain, with a prominent distribution in striatum.

The protein localises to the cell membrane. In terms of biological role, orphan receptor with constitutive G(s) signaling activity that activate cyclic AMP. Promotes neurite outgrowth and blocks myelin inhibition in neurons. The chain is G-protein coupled receptor 6 (Gpr6) from Rattus norvegicus (Rat).